Reading from the N-terminus, the 309-residue chain is Aurora kinase C (309 aa).

The disordered stretch occupies residues 1 to 33 (MSSPRAVVQLGKAQPAGEELATANQTAQQPSSP). Over residues 22–32 (TANQTAQQPSS) the composition is skewed to polar residues. The Protein kinase domain maps to 43–293 (FEIGRPLGKG…LAQILKHPWV (251 aa)). Residues 49-57 (LGKGKFGNV) and lysine 72 each bind ATP. Aspartate 166 functions as the Proton acceptor in the catalytic mechanism. Position 198 is a phosphothreonine; by PKA (threonine 198). Positions 292-309 (WVQAHSRRVLPPCAQMAS) are interaction with BIRC5.

The protein belongs to the protein kinase superfamily. Ser/Thr protein kinase family. Aurora subfamily. In terms of assembly, component of the chromosomal passenger complex (CPC) composed of at least BIRC5/survivin, CDCA8/borealin, INCENP, AURKB or AURKC; predominantly independent AURKB- and AURKC-containing complexes exist; in the complex interacts directly with BIRC5/survivin and INCENP. Interacts with TACC1. As to expression, isoform 1 and isoform 2 are expressed in testis. Elevated expression levels were seen only in a subset of cancer cell lines such as Hep-G2, Huh-7 and HeLa. Expression is maximum at M phase.

It localises to the nucleus. It is found in the chromosome. The protein resides in the centromere. Its subcellular location is the cytoplasm. The protein localises to the cytoskeleton. It localises to the spindle. The catalysed reaction is L-seryl-[protein] + ATP = O-phospho-L-seryl-[protein] + ADP + H(+). It carries out the reaction L-threonyl-[protein] + ATP = O-phospho-L-threonyl-[protein] + ADP + H(+). Its activity is regulated as follows. Okadaic acid, an inhibitor of protein phosphatase 1 (PP1), protein phosphatase 2A (PP2A) and protein phosphatase 5 (PP5), increases AURKC activity. AURKC is also stabilized through its interaction with INCENP, which also acts as an activator. Functionally, serine/threonine-protein kinase component of the chromosomal passenger complex (CPC), a complex that acts as a key regulator of mitosis. The CPC complex has essential functions at the centromere in ensuring correct chromosome alignment and segregation and is required for chromatin-induced microtubule stabilization and spindle assembly. Also plays a role in meiosis and more particularly in spermatogenesis. Has redundant cellular functions with AURKB and can rescue an AURKB knockdown. Like AURKB, AURKC phosphorylates histone H3 at 'Ser-10' and 'Ser-28'. AURKC phosphorylates the CPC complex subunits BIRC5/survivin and INCENP leading to increased AURKC activity. Phosphorylates TACC1, another protein involved in cell division, at 'Ser-228'. The protein is Aurora kinase C (AURKC) of Homo sapiens (Human).